The chain runs to 315 residues: Ribose-phosphate pyrophosphokinase (315 aa).

ATP contacts are provided by residues 37 to 39 (DSE) and 96 to 97 (RQ). His-131 and Asp-170 together coordinate Mg(2+). Lys-194 is a catalytic residue. Residues Arg-196, Asp-220, and 224–228 (DTGGT) contribute to the D-ribose 5-phosphate site.

It belongs to the ribose-phosphate pyrophosphokinase family. Class I subfamily. As to quaternary structure, homohexamer. It depends on Mg(2+) as a cofactor.

It localises to the cytoplasm. It catalyses the reaction D-ribose 5-phosphate + ATP = 5-phospho-alpha-D-ribose 1-diphosphate + AMP + H(+). Its pathway is metabolic intermediate biosynthesis; 5-phospho-alpha-D-ribose 1-diphosphate biosynthesis; 5-phospho-alpha-D-ribose 1-diphosphate from D-ribose 5-phosphate (route I): step 1/1. Involved in the biosynthesis of the central metabolite phospho-alpha-D-ribosyl-1-pyrophosphate (PRPP) via the transfer of pyrophosphoryl group from ATP to 1-hydroxyl of ribose-5-phosphate (Rib-5-P). In Marinomonas sp. (strain MWYL1), this protein is Ribose-phosphate pyrophosphokinase.